The primary structure comprises 520 residues: GMP synthase [glutamine-hydrolyzing] (520 aa).

The Glutamine amidotransferase type-1 domain maps to 12–205 (KIIVLDYGSQ…AISICGARGD (194 aa)). Cysteine 89 functions as the Nucleophile in the catalytic mechanism. Catalysis depends on residues histidine 179 and glutamate 181. The GMPS ATP-PPase domain maps to 206-395 (WSMDNFIDME…LGMPEEIVWR (190 aa)). Residue 233 to 239 (SGGVDSS) coordinates ATP.

As to quaternary structure, homodimer.

The enzyme catalyses XMP + L-glutamine + ATP + H2O = GMP + L-glutamate + AMP + diphosphate + 2 H(+). It participates in purine metabolism; GMP biosynthesis; GMP from XMP (L-Gln route): step 1/1. Catalyzes the synthesis of GMP from XMP. The protein is GMP synthase [glutamine-hydrolyzing] of Streptococcus pyogenes serotype M5 (strain Manfredo).